The primary structure comprises 261 residues: Cytochrome c oxidase subunit 3 (261 aa).

Residues 2 to 15 (THQTHAYHMVNPSP) are Mitochondrial matrix-facing. A helical transmembrane segment spans residues 16–34 (WPLTGALSALLLTSGLVMW). At 35-40 (FHYNST) the chain is on the mitochondrial intermembrane side. The helical transmembrane segment at 41 to 66 (ILLSLGLLTNILTMYQWWRDIIREGT) threads the bilayer. Topologically, residues 67–72 (YQGHHT) are mitochondrial matrix. Residues 73-105 (PIVQKGLRYGMILFIVSEVFFFAGFFWAFYHSS) traverse the membrane as a helical segment. Over 106 to 128 (LVPTHDLGGCWPPTGITPLNPLE) the chain is Mitochondrial intermembrane. A helical membrane pass occupies residues 129-152 (VPLLNTSVLLASGVSITWAHHSLM). The Mitochondrial matrix portion of the chain corresponds to 153-155 (EGN). A helical transmembrane segment spans residues 156–183 (RNHMNQALLITILLGLYFTILQASEYFE). Residues 184-190 (TSFSISD) are Mitochondrial intermembrane-facing. Residues 191 to 223 (GIYGSTFFMATGFHGLHVIIGSTFLIVCLLRQL) form a helical membrane-spanning segment. Residues 224–232 (KFHFTSKHH) are Mitochondrial matrix-facing. Residues 233 to 256 (FGFEAAAWYWHFVDVVWLFLYVSI) form a helical membrane-spanning segment. At 257 to 261 (YWWGS) the chain is on the mitochondrial intermembrane side.

It belongs to the cytochrome c oxidase subunit 3 family. In terms of assembly, component of the cytochrome c oxidase (complex IV, CIV), a multisubunit enzyme composed of 14 subunits. The complex is composed of a catalytic core of 3 subunits MT-CO1, MT-CO2 and MT-CO3, encoded in the mitochondrial DNA, and 11 supernumerary subunits COX4I, COX5A, COX5B, COX6A, COX6B, COX6C, COX7A, COX7B, COX7C, COX8 and NDUFA4, which are encoded in the nuclear genome. The complex exists as a monomer or a dimer and forms supercomplexes (SCs) in the inner mitochondrial membrane with NADH-ubiquinone oxidoreductase (complex I, CI) and ubiquinol-cytochrome c oxidoreductase (cytochrome b-c1 complex, complex III, CIII), resulting in different assemblies (supercomplex SCI(1)III(2)IV(1) and megacomplex MCI(2)III(2)IV(2)).

It localises to the mitochondrion inner membrane. It catalyses the reaction 4 Fe(II)-[cytochrome c] + O2 + 8 H(+)(in) = 4 Fe(III)-[cytochrome c] + 2 H2O + 4 H(+)(out). Component of the cytochrome c oxidase, the last enzyme in the mitochondrial electron transport chain which drives oxidative phosphorylation. The respiratory chain contains 3 multisubunit complexes succinate dehydrogenase (complex II, CII), ubiquinol-cytochrome c oxidoreductase (cytochrome b-c1 complex, complex III, CIII) and cytochrome c oxidase (complex IV, CIV), that cooperate to transfer electrons derived from NADH and succinate to molecular oxygen, creating an electrochemical gradient over the inner membrane that drives transmembrane transport and the ATP synthase. Cytochrome c oxidase is the component of the respiratory chain that catalyzes the reduction of oxygen to water. Electrons originating from reduced cytochrome c in the intermembrane space (IMS) are transferred via the dinuclear copper A center (CU(A)) of subunit 2 and heme A of subunit 1 to the active site in subunit 1, a binuclear center (BNC) formed by heme A3 and copper B (CU(B)). The BNC reduces molecular oxygen to 2 water molecules using 4 electrons from cytochrome c in the IMS and 4 protons from the mitochondrial matrix. The sequence is that of Cytochrome c oxidase subunit 3 from Rattus norvegicus (Rat).